A 651-amino-acid chain; its full sequence is BTB/POZ domain-containing protein At3g44820 (651 aa).

One can recognise a BTB domain in the interval 25 to 96 (SDITVVVDDV…CYGARVDITS (72 aa)). Residues 211–509 (DWWYEDISYL…LQVLFFEQMH (299 aa)) form the NPH3 domain. The interval 611–651 (DAKNDTVQNSVSSTPRSATADHTLPRSSRHSKHRKSFSFFG) is disordered. The span at 615 to 627 (DTVQNSVSSTPRS) shows a compositional bias: polar residues. Residues 637 to 651 (SSRHSKHRKSFSFFG) show a composition bias toward basic residues.

This sequence belongs to the NPH3 family.

It participates in protein modification; protein ubiquitination. May act as a substrate-specific adapter of an E3 ubiquitin-protein ligase complex (CUL3-RBX1-BTB) which mediates the ubiquitination and subsequent proteasomal degradation of target proteins. In Arabidopsis thaliana (Mouse-ear cress), this protein is BTB/POZ domain-containing protein At3g44820.